Here is a 357-residue protein sequence, read N- to C-terminus: Protein RecA (357 aa).

Residue G71 to T78 participates in ATP binding.

This sequence belongs to the RecA family.

It localises to the cytoplasm. In terms of biological role, can catalyze the hydrolysis of ATP in the presence of single-stranded DNA, the ATP-dependent uptake of single-stranded DNA by duplex DNA, and the ATP-dependent hybridization of homologous single-stranded DNAs. It interacts with LexA causing its activation and leading to its autocatalytic cleavage. This is Protein RecA from Ehrlichia chaffeensis (strain ATCC CRL-10679 / Arkansas).